A 179-amino-acid polypeptide reads, in one-letter code: ATP-dependent protease subunit HslV (179 aa).

Thr-6 is an active-site residue. 3 residues coordinate Na(+): Ser-162, Cys-165, and Thr-168.

It belongs to the peptidase T1B family. HslV subfamily. A double ring-shaped homohexamer of HslV is capped on each side by a ring-shaped HslU homohexamer. The assembly of the HslU/HslV complex is dependent on binding of ATP.

It is found in the cytoplasm. It carries out the reaction ATP-dependent cleavage of peptide bonds with broad specificity.. Its activity is regulated as follows. Allosterically activated by HslU binding. In terms of biological role, protease subunit of a proteasome-like degradation complex believed to be a general protein degrading machinery. The chain is ATP-dependent protease subunit HslV from Maridesulfovibrio salexigens (strain ATCC 14822 / DSM 2638 / NCIMB 8403 / VKM B-1763) (Desulfovibrio salexigens).